We begin with the raw amino-acid sequence, 127 residues long: uncharacterized protein (127 aa).

Helical transmembrane passes span 13–35 (ILLL…GIIF) and 57–81 (AVLI…IMIW).

It is found in the cell membrane. This is an uncharacterized protein from Mycoplasma genitalium (strain ATCC 33530 / DSM 19775 / NCTC 10195 / G37) (Mycoplasmoides genitalium).